The chain runs to 377 residues: Geranylgeranyl transferase type-1 subunit beta (377 aa).

PFTB repeat units follow at residues 144–186 (KEAC…YMLN), 193–234 (MKKA…CLMG), 245–284 (LNRI…KLLK), and 291–333 (FEKN…SLME). Geranylgeranyl diphosphate is bound by residues 219 to 221 (HGG) and 263 to 266 (RPNK). Positions 269 and 271 each coordinate Zn(2+). Position 272–275 (272–275 (YSFW)) interacts with geranylgeranyl diphosphate. Residue His-321 coordinates Zn(2+).

Belongs to the protein prenyltransferase subunit beta family. As to quaternary structure, heterodimer of FNTA and PGGT1B. PGGT1B mediates interaction with substrate peptides. The cofactor is Zn(2+). Mg(2+) serves as cofactor.

It catalyses the reaction geranylgeranyl diphosphate + L-cysteinyl-[protein] = S-geranylgeranyl-L-cysteinyl-[protein] + diphosphate. In terms of biological role, catalyzes the transfer of a geranyl-geranyl moiety from geranyl-geranyl pyrophosphate to a cysteine at the fourth position from the C-terminus of proteins having the C-terminal sequence Cys-aliphatic-aliphatic-X. Known substrates include RAC1, RAC2, RAP1A and RAP1B. The sequence is that of Geranylgeranyl transferase type-1 subunit beta (PGGT1B) from Homo sapiens (Human).